A 184-amino-acid chain; its full sequence is Structural protein V8 (184 aa).

The disordered stretch occupies residues 14-35 (IYNKSNTLTNTPSNPTGNTNTL).

Belongs to the sputnik virus V6 family.

Its subcellular location is the virion. This chain is Structural protein V8, found in Sputnik virophage.